A 69-amino-acid chain; its full sequence is Small ribosomal subunit protein bS21 (69 aa).

The segment at 50 to 69 is disordered; that stretch reads KAFKRKQAKKVRKLKQKTNR.

This sequence belongs to the bacterial ribosomal protein bS21 family.

The protein is Small ribosomal subunit protein bS21 of Borrelia garinii subsp. bavariensis (strain ATCC BAA-2496 / DSM 23469 / PBi) (Borreliella bavariensis).